A 252-amino-acid polypeptide reads, in one-letter code: Probable transcriptional regulatory protein A1E_02520 (252 aa).

The protein belongs to the TACO1 family.

It localises to the cytoplasm. This is Probable transcriptional regulatory protein A1E_02520 from Rickettsia canadensis (strain McKiel).